The following is a 435-amino-acid chain: Tol-Pal system protein TolB (435 aa).

The first 26 residues, 1 to 26 (MKTFSLLRILIVLVGMAGAFATPAMA), serve as a signal peptide directing secretion.

It belongs to the TolB family. As to quaternary structure, the Tol-Pal system is composed of five core proteins: the inner membrane proteins TolA, TolQ and TolR, the periplasmic protein TolB and the outer membrane protein Pal. They form a network linking the inner and outer membranes and the peptidoglycan layer.

The protein localises to the periplasm. Its function is as follows. Part of the Tol-Pal system, which plays a role in outer membrane invagination during cell division and is important for maintaining outer membrane integrity. The sequence is that of Tol-Pal system protein TolB from Allorhizobium ampelinum (strain ATCC BAA-846 / DSM 112012 / S4) (Agrobacterium vitis (strain S4)).